The chain runs to 383 residues: uncharacterized protein (383 aa).

2 helical membrane-spanning segments follow: residues 49–69 (VDLLAAVQASVEPAALIGCVA) and 347–367 (LLGGIPLAGFFAAGEIGPVAG).

This sequence to M.tuberculosis Rv0874c.

It localises to the cell membrane. This is an uncharacterized protein from Mycobacterium tuberculosis (strain CDC 1551 / Oshkosh).